A 422-amino-acid chain; its full sequence is Isocitrate dehydrogenase [NADP] (422 aa).

T94 contributes to the NADP(+) binding site. S103, N105, R109, R119, and R143 together coordinate D-threo-isocitrate. D310 lines the Mg(2+) pocket. Residues 344-350 (HGTAPKY), N357, Y396, and R400 contribute to the NADP(+) site.

This sequence belongs to the isocitrate and isopropylmalate dehydrogenases family. As to quaternary structure, homodimer. Mg(2+) serves as cofactor. The cofactor is Mn(2+).

It carries out the reaction D-threo-isocitrate + NADP(+) = 2-oxoglutarate + CO2 + NADPH. Catalyzes the oxidative decarboxylation of isocitrate to 2-oxoglutarate and carbon dioxide with the concomitant reduction of NADP(+). The polypeptide is Isocitrate dehydrogenase [NADP] (icd) (Staphylococcus epidermidis (strain ATCC 35984 / DSM 28319 / BCRC 17069 / CCUG 31568 / BM 3577 / RP62A)).